We begin with the raw amino-acid sequence, 241 residues long: DnaA regulatory inactivator Hda (241 aa).

Belongs to the DnaA family. HdA subfamily. As to quaternary structure, the active form seems to be an ADP-bound monomer. Forms the RIDA complex (regulatory inactivation of DnaA) of ATP-DnaA, ADP-Hda and the DNA-loaded beta sliding clamp (dnaN).

Functionally, mediates the interaction of DNA replication initiator protein DnaA with DNA polymerase subunit beta sliding clamp (dnaN). Stimulates hydrolysis of ATP-DnaA to ADP-DnaA, rendering DnaA inactive for reinitiation, a process called regulatory inhibition of DnaA or RIDA. The polypeptide is DnaA regulatory inactivator Hda (Citrobacter koseri (strain ATCC BAA-895 / CDC 4225-83 / SGSC4696)).